A 263-amino-acid polypeptide reads, in one-letter code: UPF0758 protein Pden_2304 (263 aa).

The MPN domain occupies 141 to 263; the sequence is VLTSWDALLD…ELSFRSEGLL (123 aa). Residues H212, H214, and D225 each contribute to the Zn(2+) site. The short motif at 212–225 is the JAMM motif element; it reads HNHPSGDPTPSQAD.

This sequence belongs to the UPF0758 family.

The sequence is that of UPF0758 protein Pden_2304 from Paracoccus denitrificans (strain Pd 1222).